A 236-amino-acid chain; its full sequence is MTRRYWNINLEEMMEAGVHFGHGTRKWNPKMAPYISAKRKGIHITNLTRTARFLSEACDLVFDAASRGKQFLIVGTKNKEADSVAWAAIRARCHYVNKKWLGGMLTNWSTTETRLHKFRDLRTEQKTGGLSRLPKRDAAMLKRQLSHLQTYLGGIKYMTGLPDIVIIVDQHEEYTALQECITLGIPTICLIDTNCDPDLADISIPANDDAISSIRLILNKLVFAICEGRSGYIRNP.

This sequence belongs to the universal ribosomal protein uS2 family.

It is found in the plastid. The protein resides in the chloroplast. This Helianthus annuus (Common sunflower) protein is Small ribosomal subunit protein uS2c (rps2).